The chain runs to 686 residues: Potassium-transporting ATPase ATP-binding subunit (686 aa).

Transmembrane regions (helical) follow at residues 38–58 and 64–84; these read VMFVVWAGSLLTTVLVVKDLV and AAPLGFTVQVTLWLWFTVLFA. Residues 101–123 form a disordered region; that stretch reads ALRKMRKETTARRWKDGREERVP. A compositionally biased stretch (basic and acidic residues) spans 107 to 123; the sequence is KETTARRWKDGREERVP. Helical transmembrane passes span 224–244 and 257–277; these read ILLVGLTLIFLLACVTLVPLA and VALLVCLIPTTIGGLLSAIGI. The active-site 4-aspartylphosphate intermediate is the Asp-308. ATP-binding positions include Asp-345, Glu-349, 378–385, and Lys-399; that span reads FTAQTRMS. Asp-522 and Asp-526 together coordinate Mg(2+). A run of 3 helical transmembrane segments spans residues 592-612, 620-640, and 666-686; these read FAILPALFMGVFPQIAPLNVM, AVLSAVIFNALIIILLIPLAL, and VIVPFVGIKVIDVLLGAVGLA.

This sequence belongs to the cation transport ATPase (P-type) (TC 3.A.3) family. Type IA subfamily. As to quaternary structure, the system is composed of three essential subunits: KdpA, KdpB and KdpC.

It localises to the cell membrane. The enzyme catalyses K(+)(out) + ATP + H2O = K(+)(in) + ADP + phosphate + H(+). In terms of biological role, part of the high-affinity ATP-driven potassium transport (or Kdp) system, which catalyzes the hydrolysis of ATP coupled with the electrogenic transport of potassium into the cytoplasm. This subunit is responsible for energy coupling to the transport system and for the release of the potassium ions to the cytoplasm. This is Potassium-transporting ATPase ATP-binding subunit from Myxococcus xanthus.